Consider the following 57-residue polypeptide: UPF0391 membrane protein Patl_0263 (57 aa).

2 helical membrane passes run 8 to 28 and 30 to 50; these read FFVLGVIAAVFGFGGVIGVAA and IAKVIFLLCVAFVVLFSVLAF.

This sequence belongs to the UPF0391 family.

Its subcellular location is the cell membrane. This Pseudoalteromonas atlantica (strain T6c / ATCC BAA-1087) protein is UPF0391 membrane protein Patl_0263.